We begin with the raw amino-acid sequence, 434 residues long: Enolase (434 aa).

Q165 lines the (2R)-2-phosphoglycerate pocket. The active-site Proton donor is the E207. Mg(2+) contacts are provided by D244, E291, and D318. (2R)-2-phosphoglycerate-binding residues include K343, R372, S373, and K394. Residue K343 is the Proton acceptor of the active site.

It belongs to the enolase family. Mg(2+) serves as cofactor.

The protein resides in the cytoplasm. It is found in the secreted. It localises to the cell surface. The enzyme catalyses (2R)-2-phosphoglycerate = phosphoenolpyruvate + H2O. The protein operates within carbohydrate degradation; glycolysis; pyruvate from D-glyceraldehyde 3-phosphate: step 4/5. Its function is as follows. Catalyzes the reversible conversion of 2-phosphoglycerate (2-PG) into phosphoenolpyruvate (PEP). It is essential for the degradation of carbohydrates via glycolysis. The chain is Enolase from Staphylococcus aureus (strain USA300 / TCH1516).